The following is a 96-amino-acid chain: Co-chaperonin GroES (96 aa).

Belongs to the GroES chaperonin family. In terms of assembly, heptamer of 7 subunits arranged in a ring. Interacts with the chaperonin GroEL.

The protein localises to the cytoplasm. In terms of biological role, together with the chaperonin GroEL, plays an essential role in assisting protein folding. The GroEL-GroES system forms a nano-cage that allows encapsulation of the non-native substrate proteins and provides a physical environment optimized to promote and accelerate protein folding. GroES binds to the apical surface of the GroEL ring, thereby capping the opening of the GroEL channel. The protein is Co-chaperonin GroES of Acidithiobacillus ferrooxidans (strain ATCC 23270 / DSM 14882 / CIP 104768 / NCIMB 8455) (Ferrobacillus ferrooxidans (strain ATCC 23270)).